Consider the following 415-residue polypeptide: Serine hydroxymethyltransferase (415 aa).

(6S)-5,6,7,8-tetrahydrofolate is bound by residues Leu117 and 121-123 (GHL). Lys225 is modified (N6-(pyridoxal phosphate)lysine). (6S)-5,6,7,8-tetrahydrofolate-binding positions include Glu241 and 349–351 (SPF).

The protein belongs to the SHMT family. As to quaternary structure, homodimer. It depends on pyridoxal 5'-phosphate as a cofactor.

Its subcellular location is the cytoplasm. It carries out the reaction (6R)-5,10-methylene-5,6,7,8-tetrahydrofolate + glycine + H2O = (6S)-5,6,7,8-tetrahydrofolate + L-serine. It functions in the pathway one-carbon metabolism; tetrahydrofolate interconversion. It participates in amino-acid biosynthesis; glycine biosynthesis; glycine from L-serine: step 1/1. In terms of biological role, catalyzes the reversible interconversion of serine and glycine with tetrahydrofolate (THF) serving as the one-carbon carrier. This reaction serves as the major source of one-carbon groups required for the biosynthesis of purines, thymidylate, methionine, and other important biomolecules. Also exhibits THF-independent aldolase activity toward beta-hydroxyamino acids, producing glycine and aldehydes, via a retro-aldol mechanism. The polypeptide is Serine hydroxymethyltransferase (Campylobacter hominis (strain ATCC BAA-381 / DSM 21671 / CCUG 45161 / LMG 19568 / NCTC 13146 / CH001A)).